A 533-amino-acid polypeptide reads, in one-letter code: Suppressor of cytokine signaling 6 (533 aa).

Disordered regions lie at residues 54 to 136 (CDIG…WPLR) and 177 to 199 (ELRD…PGDL). Residues 59-69 (EDEKGKNRSKS) show a composition bias toward basic and acidic residues. The segment covering 76-88 (LKRRLSAKQKTKG) has biased composition (basic residues). Positions 177–189 (ELRDLQPEPRPES) are enriched in basic and acidic residues. Residues 382 to 489 (WYWGPITRWE…TYPVRLTNPV (108 aa)) enclose the SH2 domain. Positions 484–533 (RLTNPVSRFMQVRSLQYLCRFVIRQYTRIDLIQKLPLPNKMKDYLQEKHY) constitute an SOCS box domain.

In terms of assembly, interacts with KIT (phosphorylated). Interacts with RBCK1. Interacts with phosphorylated IRS4. Interacts with PIM3.

It participates in protein modification; protein ubiquitination. Its function is as follows. SOCS family proteins form part of a classical negative feedback system that regulates cytokine signal transduction. May be a substrate recognition component of a SCF-like ECS (Elongin BC-CUL2/5-SOCS-box protein) E3 ubiquitin-protein ligase complex which mediates the ubiquitination and subsequent proteasomal degradation of target proteins. Regulates KIT degradation by ubiquitination of the tyrosine-phosphorylated receptor. The chain is Suppressor of cytokine signaling 6 (Socs6) from Mus musculus (Mouse).